We begin with the raw amino-acid sequence, 373 residues long: Tryptophan--tRNA ligase (373 aa).

A 'HIGH' region motif is present at residues 79-87; it reads PSGKFHFGH. Residues 257–261 carry the 'KMSKS' region motif; that stretch reads KMSSS.

This sequence belongs to the class-I aminoacyl-tRNA synthetase family.

Its subcellular location is the cytoplasm. It catalyses the reaction tRNA(Trp) + L-tryptophan + ATP = L-tryptophyl-tRNA(Trp) + AMP + diphosphate + H(+). This is Tryptophan--tRNA ligase from Hyperthermus butylicus (strain DSM 5456 / JCM 9403 / PLM1-5).